We begin with the raw amino-acid sequence, 196 residues long: Proteasome subunit beta 1 (196 aa).

The propeptide at 1–6 (MEKKTG) is removed in mature form; by autocatalysis. Catalysis depends on Thr-7, which acts as the Nucleophile.

This sequence belongs to the peptidase T1B family. As to quaternary structure, the 20S proteasome core is composed of 14 alpha and 14 beta subunits that assemble into four stacked heptameric rings, resulting in a barrel-shaped structure. The two inner rings, each composed of seven catalytic beta subunits, are sandwiched by two outer rings, each composed of seven alpha subunits. The catalytic chamber with the active sites is on the inside of the barrel. Has a gated structure, the ends of the cylinder being occluded by the N-termini of the alpha-subunits. Is capped at one or both ends by the proteasome regulatory ATPase, PAN.

Its subcellular location is the cytoplasm. The enzyme catalyses Cleavage of peptide bonds with very broad specificity.. The formation of the proteasomal ATPase PAN-20S proteasome complex, via the docking of the C-termini of PAN into the intersubunit pockets in the alpha-rings, triggers opening of the gate for substrate entry. Interconversion between the open-gate and close-gate conformations leads to a dynamic regulation of the 20S proteasome proteolysis activity. Component of the proteasome core, a large protease complex with broad specificity involved in protein degradation. This is Proteasome subunit beta 1 from Pyrococcus furiosus (strain ATCC 43587 / DSM 3638 / JCM 8422 / Vc1).